Here is a 380-residue protein sequence, read N- to C-terminus: N5-carboxyaminoimidazole ribonucleotide synthase (380 aa).

ATP-binding positions include arginine 108, lysine 148, 153 to 159 (GYDGKGQ), 183 to 186 (ESWV), glutamate 191, histidine 214, and 268 to 269 (NE). An ATP-grasp domain is found at 112–298 (KKAIQSAGCE…QFEQHIRAVC (187 aa)).

This sequence belongs to the PurK/PurT family. In terms of assembly, homodimer.

The enzyme catalyses 5-amino-1-(5-phospho-beta-D-ribosyl)imidazole + hydrogencarbonate + ATP = 5-carboxyamino-1-(5-phospho-D-ribosyl)imidazole + ADP + phosphate + 2 H(+). The protein operates within purine metabolism; IMP biosynthesis via de novo pathway; 5-amino-1-(5-phospho-D-ribosyl)imidazole-4-carboxylate from 5-amino-1-(5-phospho-D-ribosyl)imidazole (N5-CAIR route): step 1/2. In terms of biological role, catalyzes the ATP-dependent conversion of 5-aminoimidazole ribonucleotide (AIR) and HCO(3)(-) to N5-carboxyaminoimidazole ribonucleotide (N5-CAIR). The sequence is that of N5-carboxyaminoimidazole ribonucleotide synthase from Bacillus subtilis (strain 168).